Consider the following 347-residue polypeptide: Lipoyl synthase (347 aa).

7 residues coordinate [4Fe-4S] cluster: C77, C82, C88, C103, C107, C110, and S317. The region spanning 89–306 (FADGTATFMI…MDYGKKIGFF (218 aa)) is the Radical SAM core domain.

It belongs to the radical SAM superfamily. Lipoyl synthase family. [4Fe-4S] cluster serves as cofactor.

It is found in the cytoplasm. The catalysed reaction is [[Fe-S] cluster scaffold protein carrying a second [4Fe-4S](2+) cluster] + N(6)-octanoyl-L-lysyl-[protein] + 2 oxidized [2Fe-2S]-[ferredoxin] + 2 S-adenosyl-L-methionine + 4 H(+) = [[Fe-S] cluster scaffold protein] + N(6)-[(R)-dihydrolipoyl]-L-lysyl-[protein] + 4 Fe(3+) + 2 hydrogen sulfide + 2 5'-deoxyadenosine + 2 L-methionine + 2 reduced [2Fe-2S]-[ferredoxin]. It participates in protein modification; protein lipoylation via endogenous pathway; protein N(6)-(lipoyl)lysine from octanoyl-[acyl-carrier-protein]: step 2/2. In terms of biological role, catalyzes the radical-mediated insertion of two sulfur atoms into the C-6 and C-8 positions of the octanoyl moiety bound to the lipoyl domains of lipoate-dependent enzymes, thereby converting the octanoylated domains into lipoylated derivatives. This is Lipoyl synthase from Psychrobacter arcticus (strain DSM 17307 / VKM B-2377 / 273-4).